A 274-amino-acid chain; its full sequence is Beta-lactamase OXA-9 (274 aa).

The first 24 residues, 1-24 (MKKILLLHMLVFVSATLPISSVAS), serve as a signal peptide directing secretion. Ser58 acts as the Acyl-ester intermediate in catalysis. Lys61 is modified (N6-carboxylysine). Position 206–208 (206–208 (KSG)) interacts with substrate.

Belongs to the class-D beta-lactamase family.

It catalyses the reaction a beta-lactam + H2O = a substituted beta-amino acid. In terms of biological role, oxacillin-hydrolyzing beta-lactamase. Confers resistance to beta-lactam antibiotics but at a significantly lower level than the TEM bla gene product. This chain is Beta-lactamase OXA-9 (bla), found in Klebsiella aerogenes (Enterobacter aerogenes).